Consider the following 554-residue polypeptide: Tetratricopeptide repeat protein 34 (554 aa).

8 TPR repeats span residues 38–71 (ETSC…RPQA), 166–199 (SESL…EPGN), 200–233 (VKAL…DPGT), 294–327 (PSWR…TPSS), 328–361 (EAAQ…DTQD), 411–445 (NPYH…PAED), 452–485 (SEDF…APAQ), and 500–533 (ASVF…DPSH).

This Mus musculus (Mouse) protein is Tetratricopeptide repeat protein 34 (Ttc34).